Consider the following 323-residue polypeptide: MSKNHQKVVLVGDGQVGSAYAYALVQQGLAEELAIVNLSKEQAEGDALDLEDATVFTAPKQVYQADHHACADADLVVICAGAAQKPGETRLDLVGKNLEIMKQITKSIMATGFDGILLLATNPVDVLTYAVQKISGLPASRVISSGTSLDSARLRIALAKKLGVSPLDISANVMAEHGDSEFAAYSSATVGGKPLLQICEEQGISNDELLKIEDDVRHKAYEIINRKGFTAYGVATCLMRITRAILRDENAVLPVGAYIDGEYGIKDNYLGTPAVINASGISKVIEVPLNERESEAMTKSAEALKKIATDGMTKVGLVNYLIK.

NAD(+)-binding positions include V16, N37, and 81-82 (GA). Substrate contacts are provided by residues Q84, R90, and 122–125 (NPVD). NAD(+) contacts are provided by residues 120–122 (ATN) and S145. Residue 150–153 (DSAR) coordinates substrate. The Proton acceptor role is filled by H177. Phosphotyrosine is present on Y221. T230 serves as a coordination point for substrate.

It belongs to the LDH/MDH superfamily. LDH family. Homotetramer.

The protein resides in the cytoplasm. The enzyme catalyses (S)-lactate + NAD(+) = pyruvate + NADH + H(+). It participates in fermentation; pyruvate fermentation to lactate; (S)-lactate from pyruvate: step 1/1. Its function is as follows. Catalyzes the conversion of lactate to pyruvate. The protein is L-lactate dehydrogenase of Limosilactobacillus reuteri (Lactobacillus reuteri).